Here is a 607-residue protein sequence, read N- to C-terminus: Actin-related protein 5 (607 aa).

Residue Lys-283 forms a Glycyl lysine isopeptide (Lys-Gly) (interchain with G-Cter in SUMO2) linkage. 2 coiled-coil regions span residues 288–327 (TLTSEEKQERRQQQLRRLQELNARRREEKLQLDQERLDRL) and 355–384 (EELQSYIQKLSIAVEQAKQKILQAEVNLEV). Low complexity predominate over residues 584–596 (SRSSDAQASSKGS). The segment at 584 to 607 (SRSSDAQASSKGSAAGGGGAGEQA) is disordered. A compositionally biased stretch (gly residues) spans 597–607 (AAGGGGAGEQA).

The protein belongs to the actin family. ARP5 subfamily. Component of the chromatin remodeling INO80 complex; specifically part of a complex module associated with the helicase ATP-binding and the helicase C-terminal domain of INO80. Interacts with DDB1. Interacts with ACTR8; the interaction is observed in asynchronous (interphase) cells but not in metaphase-arrested cells indicative for a possible dissociation of the INO80 complex in mitotic cells.

It localises to the nucleus. The protein resides in the cytoplasm. Functionally, proposed core component of the chromatin remodeling INO80 complex which is involved in transcriptional regulation, DNA replication and probably DNA repair. Involved in DNA double-strand break repair and UV-damage excision repair. The protein is Actin-related protein 5 (ACTR5) of Homo sapiens (Human).